Here is a 20-residue protein sequence, read N- to C-terminus: Punein (20 aa).

In terms of domain architecture, Barwin spans 1–20 (YHYYNPEENHFCATWDASKP).

Post-translationally, the N-terminus is blocked.

The chain is Punein from Punica granatum (Pomegranate).